The sequence spans 96 residues: Iron-sulfur cluster assembly protein CyaY (96 aa).

Belongs to the frataxin family.

Involved in iron-sulfur (Fe-S) cluster assembly. May act as a regulator of Fe-S biogenesis. This Rickettsia bellii (strain RML369-C) protein is Iron-sulfur cluster assembly protein CyaY.